A 205-amino-acid polypeptide reads, in one-letter code: Protein TGAM_1450 (205 aa).

The AMMECR1 domain maps to 7 to 201 (EWGEFLVRLA…EEYPRGPVRR (195 aa)).

This chain is Protein TGAM_1450, found in Thermococcus gammatolerans (strain DSM 15229 / JCM 11827 / EJ3).